The following is a 234-amino-acid chain: Ribonuclease 3 (234 aa).

An RNase III domain is found at Arg-6–Gly-134. Glu-47 contacts Mg(2+). Asp-51 is an active-site residue. Residues Ser-120 and Glu-123 each coordinate Mg(2+). Glu-123 is an active-site residue. The DRBM domain maps to Asp-162–Lys-231.

It belongs to the ribonuclease III family. Homodimer. It depends on Mg(2+) as a cofactor.

It is found in the cytoplasm. It catalyses the reaction Endonucleolytic cleavage to 5'-phosphomonoester.. Digests double-stranded RNA. Involved in the processing of primary rRNA transcript to yield the immediate precursors to the large and small rRNAs (23S and 16S). Processes some mRNAs, and tRNAs when they are encoded in the rRNA operon. Processes pre-crRNA and tracrRNA of type II CRISPR loci if present in the organism. This Bdellovibrio bacteriovorus (strain ATCC 15356 / DSM 50701 / NCIMB 9529 / HD100) protein is Ribonuclease 3.